We begin with the raw amino-acid sequence, 353 residues long: Keratocan (353 aa).

Residues 1-21 form the signal peptide; it reads MMTLKVCPSLLLLFLVHSVWT. The LRRNT domain maps to 34-72; it reads EHWSHYTFECPQECFCPPSFPNALYCDNKGLKEIPAIPA. 2 disulfide bridges follow: cysteine 43–cysteine 49 and cysteine 47–cysteine 59. LRR repeat units lie at residues 73-94, 97-118, 123-143, 144-165, 168-188, 194-214, 215-236, 239-262, 264-283, and 284-305; these read RIWYLYLQNNLIETISEKPFVN, HLRWINLNKNKITNNGIESGVL, RLLYLFLEDNELEEVPAPLPV, GLEQLRLARNKISRIPEGVFSN, NLTMLDLHQNNLLDSALQSDT, SLMQLNIAKNSLKKMPLSIPA, NTLQLFLDNNSIEVIPENYFSA, KVTFLRLNYNKLSDDGIPPNGFNV, SILDLQLSHNQLTKIPPINA, and HLEHLHLDHNRIKSVNGTQICP. Residue asparagine 94 is glycosylated (N-linked (GlcNAc...) (keratan sulfate) asparagine). A glycan (N-linked (GlcNAc...) asparagine) is linked at asparagine 168. Residues asparagine 223 and asparagine 261 are each glycosylated (N-linked (GlcNAc...) (keratan sulfate) asparagine). N-linked (GlcNAc...) asparagine glycosylation occurs at asparagine 299. A disulfide bond links cysteine 304 and cysteine 344.

The protein belongs to the small leucine-rich proteoglycan (SLRP) family. SLRP class II subfamily. Post-translationally, binds keratan sulfate chains.

The protein resides in the secreted. It localises to the extracellular space. It is found in the extracellular matrix. In terms of biological role, plays an important role in generating and maintaining a transparent matrix within the corneal stroma. This chain is Keratocan (KERA), found in Gallus gallus (Chicken).